The sequence spans 630 residues: Polypeptide N-acetylgalactosaminyltransferase 5 (630 aa).

Residues 1-20 (MTFSTFTRKMRGRMRSNTCR) are Cytoplasmic-facing. Residues 21–38 (IVLLTSLVWVIFDFVLIA) traverse the membrane as a helical; Signal-anchor for type II membrane protein segment. Residues 39-630 (RYSDCIGKDG…MESKFKWQAH (592 aa)) lie on the Lumenal side of the membrane. The N-linked (GlcNAc...) asparagine glycan is linked to Asn-166. Intrachain disulfides connect Cys-177-Cys-410, Cys-401-Cys-479, Cys-513-Cys-530, Cys-553-Cys-568, and Cys-594-Cys-611. The tract at residues 186–296 (LPTTSIVIVF…EGWLEPLLAR (111 aa)) is catalytic subdomain A. Asp-227 and Arg-257 together coordinate substrate. 2 residues coordinate Mn(2+): Asp-280 and His-282. Residues 356–418 (PLRTPTMAGG…PCSHVGHVFR (63 aa)) form a catalytic subdomain B region. Trp-387 lines the substrate pocket. Residue His-415 coordinates Mn(2+). Substrate contacts are provided by Arg-418 and Tyr-423. A Ricin B-type lectin domain is found at 500–622 (YYLGEIRNAE…YGKGQQWLME (123 aa)).

The protein belongs to the glycosyltransferase 2 family. GalNAc-T subfamily. It depends on Mn(2+) as a cofactor. As to expression, expressed during oogenesis, in the somatically derived follicle cells that surround the developing oocyte, which are involved in the maturation of the oocyte and construction of the egg shell, as well as playing a role in subsequent embryonic pattern formation. During embryonic stages 9-11, expressed in the primordium of the foregut, midgut and hindgut. Expressed in salivary glands from embryonic stage 12 onwards. During embryonic stages 12-13, expressed in the posterior midgut and hindgut. During embryonic stages 14-17, expressed in the hindgut and the posterior spiracles. Expression is also detected in the epidermis and antennomaxillary complex at embryonic stages 16-17. In third instar larvae, ubiquitously expressed in wing, eye-antennal, leg and haltere imaginal disks.

The protein resides in the golgi apparatus membrane. The enzyme catalyses L-seryl-[protein] + UDP-N-acetyl-alpha-D-galactosamine = a 3-O-[N-acetyl-alpha-D-galactosaminyl]-L-seryl-[protein] + UDP + H(+). It catalyses the reaction L-threonyl-[protein] + UDP-N-acetyl-alpha-D-galactosamine = a 3-O-[N-acetyl-alpha-D-galactosaminyl]-L-threonyl-[protein] + UDP + H(+). It participates in protein modification; protein glycosylation. Functionally, catalyzes the initial reaction in O-linked oligosaccharide biosynthesis, the transfer of an N-acetyl-D-galactosamine residue to a serine or threonine residue on the protein receptor. It can both act as a peptide transferase that transfers GalNAc onto unmodified peptide substrates, and as a glycopeptide transferase that requires the prior addition of a GalNAc on a peptide before adding additional GalNAc moieties. Prefers EA2 as substrate. In the larval midgut, required for O-glycosylation of apical and luminal proteins within copper cells enabling proper gut acidification. This chain is Polypeptide N-acetylgalactosaminyltransferase 5, found in Drosophila melanogaster (Fruit fly).